The chain runs to 86 residues: Apolipoprotein C-I (86 aa).

The first 26 residues, 1-26, serve as a signal peptide directing secretion; the sequence is MRLFLSLPVLVVALLMILEGPGPAQG.

It belongs to the apolipoprotein C1 family.

The protein resides in the secreted. In terms of biological role, inhibitor of lipoprotein binding to the low density lipoprotein (LDL) receptor, LDL receptor-related protein, and very low density lipoprotein (VLDL) receptor. Associates with high density lipoproteins (HDL) and the triacylglycerol-rich lipoproteins in the plasma and makes up about 10% of the protein of the VLDL and 2% of that of HDL. Appears to interfere directly with fatty acid uptake and is also the major plasma inhibitor of cholesteryl ester transfer protein (CETP). Binds free fatty acids and reduces their intracellular esterification. Modulates the interaction of APOE with beta-migrating VLDL and inhibits binding of beta-VLDL to the LDL receptor-related protein. This chain is Apolipoprotein C-I (APOC1), found in Aotus nancymaae (Ma's night monkey).